The sequence spans 207 residues: Ras-related protein Rab7 (207 aa).

Residues Gly15–Thr22, Asp63–Gln67, and Asn125–Asp128 each bind GTP. Residues Cys205 and Cys207 are each lipidated (S-geranylgeranyl cysteine). Cys207 carries the cysteine methyl ester modification.

It belongs to the small GTPase superfamily. Rab family.

The protein localises to the cell membrane. Protein transport. Probably involved in vesicular traffic. This Prunus armeniaca (Apricot) protein is Ras-related protein Rab7.